Consider the following 495-residue polypeptide: GTPase Der (495 aa).

EngA-type G domains are found at residues 3–166 (PVVA…VQDE) and 208–381 (IKLA…ACAT). GTP is bound by residues 9–16 (GRPNVGKS), 56–60 (DTGGI), 118–121 (NKTD), 214–221 (GRPNVGKS), 261–265 (DTAGV), and 326–329 (NKWD). The KH-like domain occupies 382-466 (RRVSTAMLTR…PIRIQFKEGE (85 aa)).

Belongs to the TRAFAC class TrmE-Era-EngA-EngB-Septin-like GTPase superfamily. EngA (Der) GTPase family. As to quaternary structure, associates with the 50S ribosomal subunit.

Functionally, GTPase that plays an essential role in the late steps of ribosome biogenesis. In Pectobacterium carotovorum subsp. carotovorum (strain PC1), this protein is GTPase Der.